A 161-amino-acid polypeptide reads, in one-letter code: Protein-export protein SecB (161 aa).

Belongs to the SecB family. In terms of assembly, homotetramer, a dimer of dimers. One homotetramer interacts with 1 SecA dimer.

It localises to the cytoplasm. Its function is as follows. One of the proteins required for the normal export of preproteins out of the cell cytoplasm. It is a molecular chaperone that binds to a subset of precursor proteins, maintaining them in a translocation-competent state. It also specifically binds to its receptor SecA. The chain is Protein-export protein SecB from Afipia carboxidovorans (strain ATCC 49405 / DSM 1227 / KCTC 32145 / OM5) (Oligotropha carboxidovorans).